The sequence spans 2298 residues: Protein Ycf2 (2298 aa).

G1652–S1659 contacts ATP.

It belongs to the Ycf2 family.

It localises to the plastid. Its subcellular location is the chloroplast stroma. Probable ATPase of unknown function. Its presence in a non-photosynthetic plant (Epifagus virginiana) and experiments in tobacco indicate that it has an essential function which is probably not related to photosynthesis. The chain is Protein Ycf2 from Aethionema cordifolium (Lebanon stonecress).